The following is a 555-amino-acid chain: Pyrophosphate--fructose 6-phosphate 1-phosphotransferase (555 aa).

Gly-82 is a diphosphate binding site. Substrate is bound at residue Arg-146. A Mg(2+)-binding site is contributed by Asp-176. Residues 204–206, 243–244, 251–253, Glu-312, and 428–431 contribute to the substrate site; these read TID, KY, MGR, and YEGR. Catalysis depends on Asp-206, which acts as the Proton acceptor.

Belongs to the phosphofructokinase type A (PFKA) family. PPi-dependent PFK group II subfamily. Clade 'Long' sub-subfamily. As to quaternary structure, homodimer. The cofactor is Mg(2+).

It localises to the cytoplasm. It catalyses the reaction beta-D-fructose 6-phosphate + diphosphate = beta-D-fructose 1,6-bisphosphate + phosphate + H(+). It functions in the pathway carbohydrate degradation; glycolysis; D-glyceraldehyde 3-phosphate and glycerone phosphate from D-glucose: step 3/4. Its activity is regulated as follows. Non-allosteric. Catalyzes the phosphorylation of D-fructose 6-phosphate, the first committing step of glycolysis. Uses inorganic phosphate (PPi) as phosphoryl donor instead of ATP like common ATP-dependent phosphofructokinases (ATP-PFKs), which renders the reaction reversible, and can thus function both in glycolysis and gluconeogenesis. Consistently, PPi-PFK can replace the enzymes of both the forward (ATP-PFK) and reverse (fructose-bisphosphatase (FBPase)) reactions. This is Pyrophosphate--fructose 6-phosphate 1-phosphotransferase from Borreliella burgdorferi (strain ATCC 35210 / DSM 4680 / CIP 102532 / B31) (Borrelia burgdorferi).